The sequence spans 371 residues: uncharacterized protein (371 aa).

Residues 20 to 250 form the ABC transporter domain; the sequence is VTIRNVTKRY…PANIFVAGFI (231 aa). 52–59 contributes to the ATP binding site; it reads GPSGCGKS.

This sequence belongs to the ABC transporter superfamily.

The protein localises to the cell inner membrane. In terms of biological role, probably part of a binding-protein-dependent transport system y4oPQRS. This system probably transports a sugar-like molecule. Probably responsible for energy coupling to the transport system. This is an uncharacterized protein from Sinorhizobium fredii (strain NBRC 101917 / NGR234).